A 101-amino-acid polypeptide reads, in one-letter code: Integration host factor subunit alpha (101 aa).

It belongs to the bacterial histone-like protein family. Heterodimer of an alpha and a beta chain.

Functionally, this protein is one of the two subunits of integration host factor, a specific DNA-binding protein that functions in genetic recombination as well as in transcriptional and translational control. This chain is Integration host factor subunit alpha, found in Alkalilimnicola ehrlichii (strain ATCC BAA-1101 / DSM 17681 / MLHE-1).